Here is a 431-residue protein sequence, read N- to C-terminus: MGKNVVVLGTQWGDEGKGKIVDLLTQDAQVVVRYQGGHNAGHTLKINGVKTVLRLIPSGMLRPNVTCYIANGVVLSPQALLSEIKELEGNGVNVRERLRISLACPLILPYHIALDKARETHMGKSAIGTTGRGIGPAYEDKVARRALRVGDLFHRDRFANKLTELLDYHNFVLTQYFKQPAVDLESLLDESLQWAEELRPMVCDVSACLHEHRKQGENILFEGAQGVYLDIDHGTYPYVTSSNTCVGSVINGAGFGPRYIDYVLGITKAYTTRVGGGPFPTELLDDVGKRIAERGQEFGAVTGRPRRCGWFDAVLLKRSIELNSISGLCVTKLDVLDGLEVLRIAVAYKDRDGNILSRPPLAADDFDDLLPVYEELPGWQESTADVTVMSDLPANARAYLKRIEEILGIPIDLLSTGPERDSTITLRGPFL.

Residues 13–19 (GDEGKGK) and 41–43 (GHT) contribute to the GTP site. Residue Asp-14 is the Proton acceptor of the active site. The Mg(2+) site is built by Asp-14 and Gly-41. Residues 14–17 (DEGK), 39–42 (NAGH), Thr-130, Arg-144, Gln-225, Thr-240, and Arg-304 each bind IMP. Residue His-42 is the Proton donor of the active site. 300 to 306 (AVTGRPR) is a substrate binding site. GTP-binding positions include Arg-306, 332–334 (KLD), and 415–417 (STG).

It belongs to the adenylosuccinate synthetase family. In terms of assembly, homodimer. The cofactor is Mg(2+).

It is found in the cytoplasm. The enzyme catalyses IMP + L-aspartate + GTP = N(6)-(1,2-dicarboxyethyl)-AMP + GDP + phosphate + 2 H(+). It functions in the pathway purine metabolism; AMP biosynthesis via de novo pathway; AMP from IMP: step 1/2. In terms of biological role, plays an important role in the de novo pathway of purine nucleotide biosynthesis. Catalyzes the first committed step in the biosynthesis of AMP from IMP. The protein is Adenylosuccinate synthetase of Legionella pneumophila (strain Paris).